The sequence spans 491 residues: Equilibrative nucleobase transporter 1 (491 aa).

The chain crosses the membrane as a helical span at residues 17-37 (LLECLGFAGVLFGWPSLVFVF). N-linked (GlcNAc...) asparagine glycosylation occurs at Asn-56. Helical transmembrane passes span 72–92 (LIFT…GYIF), 102–122 (LIAI…SAGS), 123–143 (AVLL…FLIT), 156–176 (STII…FLII), and 188–208 (ASFI…FLLM). 2 N-linked (GlcNAc...) asparagine glycosylation sites follow: Asn-220 and Asn-229. Position 253 is a phosphoserine (Ser-253). Thr-258 is subject to Phosphothreonine. 6 helical membrane passes run 279 to 299 (FAWH…FIGT), 319 to 339 (TNAF…GLLM), 356 to 376 (STLA…SLLC), 396 to 418 (ILQV…LAFP), 427 to 447 (GLVM…FTLI), and 456 to 476 (FYVN…PFLV).

This sequence belongs to the SLC43A transporter (TC 2.A.1.44) family. As to expression, widely expressed with highest levels in the liver and lung, followed by the pancreas. Highly expressed in macrophages.

The protein localises to the basolateral cell membrane. It catalyses the reaction adenine(out) = adenine(in). The enzyme catalyses guanine(out) = guanine(in). The catalysed reaction is hypoxanthine(out) = hypoxanthine(in). Adenine transport is strongly inhibited by decynium-22. With respect to regulation, 6-mercaptopurine-transport is inhibited by 6-thioguanine, 6-methylmercaptopurine and decynium-22. Functionally, sodium-independent purine-selective nucleobase transporter which mediates the equilibrative transport of extracellular purine nucleobases such as adenine, guanine and hypoxanthine. May regulate fatty acid (FA) transport in adipocytes, acting as a positive regulator of FA efflux and as a negative regulator of FA uptake. Sodium-independent purine-selective nucleobase transporter which mediates the equilibrative transport of extracellular purine nucleobase adenine. Mediates the influx and efflux of the purine nucleobase analog drug 6-mercaptopurine across the membrane. This chain is Equilibrative nucleobase transporter 1 (SLC43A3), found in Homo sapiens (Human).